Here is a 106-residue protein sequence, read N- to C-terminus: N(2)-fixation sustaining protein CowN (106 aa).

It belongs to the CowN family.

In terms of biological role, is required to sustain N(2)-dependent growth in the presence of low levels of carbon monoxide (CO). Probably acts by protecting the N(2) fixation ability of the nitrogenase complex, which is inactivated in the presence of CO. The chain is N(2)-fixation sustaining protein CowN from Denitrovibrio acetiphilus (strain DSM 12809 / NBRC 114555 / N2460).